Consider the following 161-residue polypeptide: PRS fimbrial major pilin protein (161 aa).

The protein belongs to the fimbrial protein family.

It localises to the secreted. The protein resides in the fimbrium. In terms of biological role, fimbriae (also called pili), polar filaments radiating from the surface of the bacterium to a length of 0.5-1.5 micrometers and numbering 100-300 per cell, enable bacteria to colonize the epithelium of specific host organs. The sequence is that of PRS fimbrial major pilin protein (prsA) from Escherichia coli.